The sequence spans 643 residues: COP9 signalosome complex subunit 10 (643 aa).

Over residues 1–33 (MTDESDNYNDFMMSDEDMDSIEMEDEENDVEGD) the composition is skewed to acidic residues. The segment at 1–37 (MTDESDNYNDFMMSDEDMDSIEMEDEENDVEGDEGQR) is disordered. A PCI domain is found at 331 to 517 (CKEEFWECLK…DTVTFYSEQH (187 aa)). The span at 573–584 (DSQSHSKSNTKS) shows a compositional bias: polar residues. A disordered region spans residues 573-594 (DSQSHSKSNTKSMSRHVSGHDP).

Component of a COP9 signalosome-like (CSN) complex.

The protein localises to the cytoplasm. Its subcellular location is the nucleus. In terms of biological role, component of the COP9 signalosome (CSN) complex that acts as an regulator of the ubiquitin (Ubl) conjugation pathway by mediating the deneddylation of the cullin subunit of SCF-type E3 ubiquitin-protein ligase complexes. The CSN complex is involved in the regulation of the mating pheromone response. This chain is COP9 signalosome complex subunit 10 (RRI2), found in Candida glabrata (strain ATCC 2001 / BCRC 20586 / JCM 3761 / NBRC 0622 / NRRL Y-65 / CBS 138) (Yeast).